The sequence spans 517 residues: Pentatricopeptide repeat-containing protein At1g77360, mitochondrial (517 aa).

A mitochondrion-targeting transit peptide spans 1 to 59 (MKRFRIRSVDFRQLVNFFSFMRWECSSSATVWVRFNMTIRIINRQSRFCCKSFLSARLY). 10 PPR repeats span residues 133 to 163 (SVRAYHMMIESTAKIRQYKLMWDLINAMRKK), 167 to 201 (NVETFCIVMRKYARAQKVDEAIYAFNVMEKYDLPP), 202 to 232 (NLVAFNGLLSALCKSKNVRKAQEVFENMRDR), 236 to 270 (DSKTYSILLEGWGKEPNLPKAREVFREMIDAGCHP), 271 to 305 (DIVTYSIMVDILCKAGRVDEALGIVRSMDPSICKP), 306 to 340 (TTFIYSVLVHTYGTENRLEEAVDTFLEMERSGMKA), 341 to 375 (DVAVFNSLIGAFCKANRMKNVYRVLKEMKSKGVTP), 376 to 406 (NSKSCNIILRHLIERGEKDEAFDVFRKMIKV), 410 to 444 (DADTYTMVIKMFCEKKEMETADKVWKYMRKKGVFP), and 445 to 479 (SMHTFSVLINGLCEERTTQKACVLLEEMIEMGIRP).

Belongs to the PPR family. P subfamily.

The protein resides in the mitochondrion. This is Pentatricopeptide repeat-containing protein At1g77360, mitochondrial from Arabidopsis thaliana (Mouse-ear cress).